Reading from the N-terminus, the 717-residue chain is Mitotic spindle assembly checkpoint protein MAD1 (717 aa).

Methionine 1 carries the N-acetylmethionine modification. At serine 16 the chain carries Phosphoserine. The stretch at 46-631 (EQSMQLEERA…QTKIQEFRKV (586 aa)) forms a coiled coil. Lysine 61 bears the N6-acetyllysine; alternate mark. A Glycyl lysine isopeptide (Lys-Gly) (interchain with G-Cter in SUMO2); alternate cross-link involves residue lysine 61. The short motif at 79–82 (KRAR) is the Nuclear localization signal element. A phosphoserine mark is found at serine 214 and serine 428. The interval 380–532 (LLEERKKREI…EMQMERLTLQ (153 aa)) is necessary for interaction with NEK2. The segment at 540-551 (TKVLHMSLNPAS) is necessary for interaction with MAD2L1.

The protein belongs to the MAD1 family. In terms of assembly, homodimer. Dimerizes via its N- and C- terminal regions. Heterodimerizes with MAD2L1 in order to form a tetrameric MAD1L1-MAD2L1 core complex. Interacts with the closed conformation form of MAD2L1 (C-MAD2) and open conformation form of MAD2L1 (O-MAD2). It is unclear whether MAD1L1 dimerization promotes the conversion of closed to open conformation of MAD2L1. Formation of a heterotetrameric core complex containing two molecules each of MAD1L1 and of MAD2L1 promotes binding of another molecule of MAD2L1 to each MAD2L1, resulting in a heterohexamer. Perturbation of the original MAD1L1-MAD2L1 structure by the spindle checkpoint may decrease MAD2L1 affinity for MAD1L1. CDC20 can compete with MAD1L1 for MAD2L1 binding, until the attachment and/or tension dampen the checkpoint signal, preventing further release of MAD2L1 on to CDC20. Also able to interact with the BUB1/BUB3 complex. Interacts with NEK2. Interacts with TTK. Interacts with TPR; the interactions occurs in a microtubule-independent manner. Interacts with IK. Interacts with the viral Tax protein. Interacts with PRAP1. Post-translationally, phosphorylated; by BUB1. Become hyperphosphorylated in late S through M phases or after mitotic spindle damage.

It localises to the nucleus. The protein resides in the chromosome. It is found in the centromere. Its subcellular location is the kinetochore. The protein localises to the nucleus envelope. It localises to the cytoplasm. The protein resides in the cytoskeleton. It is found in the microtubule organizing center. Its subcellular location is the centrosome. The protein localises to the spindle. It localises to the spindle pole. Functionally, component of the spindle-assembly checkpoint that prevents the onset of anaphase until all chromosomes are properly aligned at the metaphase plate. Forms a heterotetrameric complex with the closed conformation form of MAD2L1 (C-MAD2) at unattached kinetochores during prometaphase, recruits an open conformation of MAD2L1 (O-MAD2) and promotes the conversion of O-MAD2 to C-MAD2, which ensures mitotic checkpoint signaling. The chain is Mitotic spindle assembly checkpoint protein MAD1 (MAD1L1) from Cricetulus griseus (Chinese hamster).